The primary structure comprises 25 residues: Chaperonin GroEL (25 aa).

It belongs to the chaperonin (HSP60) family. As to quaternary structure, forms a cylinder of 14 subunits composed of two heptameric rings stacked back-to-back. Interacts with the co-chaperonin GroES.

It is found in the cytoplasm. It carries out the reaction ATP + H2O + a folded polypeptide = ADP + phosphate + an unfolded polypeptide.. Functionally, together with its co-chaperonin GroES, plays an essential role in assisting protein folding. The GroEL-GroES system forms a nano-cage that allows encapsulation of the non-native substrate proteins and provides a physical environment optimized to promote and accelerate protein folding. The sequence is that of Chaperonin GroEL from Delftia acidovorans (Pseudomonas acidovorans).